We begin with the raw amino-acid sequence, 425 residues long: Serine--tRNA ligase (425 aa).

229–231 (TSE) lines the L-serine pocket. ATP is bound by residues 259–261 (RKE) and valine 275. Residue glutamate 282 participates in L-serine binding. Position 349–352 (349–352 (EITS)) interacts with ATP. Residue threonine 384 coordinates L-serine.

Belongs to the class-II aminoacyl-tRNA synthetase family. Type-1 seryl-tRNA synthetase subfamily. Homodimer. The tRNA molecule binds across the dimer.

Its subcellular location is the cytoplasm. The catalysed reaction is tRNA(Ser) + L-serine + ATP = L-seryl-tRNA(Ser) + AMP + diphosphate + H(+). It catalyses the reaction tRNA(Sec) + L-serine + ATP = L-seryl-tRNA(Sec) + AMP + diphosphate + H(+). The protein operates within aminoacyl-tRNA biosynthesis; selenocysteinyl-tRNA(Sec) biosynthesis; L-seryl-tRNA(Sec) from L-serine and tRNA(Sec): step 1/1. Its function is as follows. Catalyzes the attachment of serine to tRNA(Ser). Is also able to aminoacylate tRNA(Sec) with serine, to form the misacylated tRNA L-seryl-tRNA(Sec), which will be further converted into selenocysteinyl-tRNA(Sec). In Borreliella afzelii (strain PKo) (Borrelia afzelii), this protein is Serine--tRNA ligase.